A 220-amino-acid polypeptide reads, in one-letter code: Probable nicotinate-nucleotide adenylyltransferase (220 aa).

It belongs to the NadD family.

It catalyses the reaction nicotinate beta-D-ribonucleotide + ATP + H(+) = deamido-NAD(+) + diphosphate. The protein operates within cofactor biosynthesis; NAD(+) biosynthesis; deamido-NAD(+) from nicotinate D-ribonucleotide: step 1/1. Catalyzes the reversible adenylation of nicotinate mononucleotide (NaMN) to nicotinic acid adenine dinucleotide (NaAD). The polypeptide is Probable nicotinate-nucleotide adenylyltransferase (Saccharophagus degradans (strain 2-40 / ATCC 43961 / DSM 17024)).